The sequence spans 172 residues: Translocator protein 2 (172 aa).

A run of 5 helical transmembrane segments spans residues 3 to 23, 45 to 65, 80 to 100, 104 to 124, and 130 to 150; these read PQGAIFVALPHLGPILVSLLT, VLLAGWITIYFVMGYASYLVW, LGLYAVQLAVSWAVLIFFFAA, GLALLHMLLLYGLVVSTALIW, and LAAVLLLPYLAWLTVTASIAY.

The protein belongs to the TspO/BZRP family. As to quaternary structure, homotetramer. May also form homodimer. As to expression, expressed in erythrocytes (at protein level).

Its subcellular location is the endoplasmic reticulum membrane. The protein localises to the cell membrane. Cholesterol-binding protein involved in the redistribution of cholesterol from lipid droplets to the endoplasmic reticulum. Required to meet cholesterol demands during erythropoietic differentiation. May play a role in transport processes at the plasma membrane of erythrocytes, including regulating VDAC-mediated ATP export, and import of the heme precursors protoporphyrin IX and 5-aminolevulinic acid. The sequence is that of Translocator protein 2 from Canis lupus familiaris (Dog).